The sequence spans 359 residues: Protein Wnt-9b (359 aa).

Positions 1–23 (MRPAPALALAALCLLVLPAAAAA) are cleaved as a signal peptide. Disulfide bonds link C91-C102, C137-C145, C147-C164, C212-C226, C214-C221, C293-C318, C307-C313, C317-C357, C333-C348, C335-C345, and C340-C341. A glycan (N-linked (GlcNAc...) asparagine) is linked at N101. A lipid anchor (O-palmitoleoyl serine; by PORCN) is attached at S218.

The protein belongs to the Wnt family. As to quaternary structure, forms a soluble 1:1 complex with AFM; this prevents oligomerization and is required for prolonged biological activity. The complex with AFM may represent the physiological form in body fluids. Component of the Wnt-Fzd-LRP5-LRP6 signaling complex that contains a WNT protein, a FZD protein and LRP5 or LRP6. Interacts directly in the complex with LRP6. Interacts with PKD1 (via extracellular domain). In terms of processing, palmitoleoylation is required for efficient binding to frizzled receptors. Depalmitoleoylation leads to Wnt signaling pathway inhibition.

Its subcellular location is the secreted. It is found in the extracellular space. It localises to the extracellular matrix. Ligand for members of the frizzled family of seven transmembrane receptors. Functions in the canonical Wnt/beta-catenin signaling pathway. Required for normal embryonic kidney development, and for normal development of the urogenital tract, including uterus and part of the oviduct and the upper vagina in females, and epididymis and vas deferens in males. Activates a signaling cascade in the metanephric mesenchyme that induces tubulogenesis. Acts upstream of WNT4 in the signaling pathways that mediate development of kidney tubules and the Muellerian ducts. Plays a role in cranofacial development and is required for normal fusion of the palate during embryonic development. This Mus musculus (Mouse) protein is Protein Wnt-9b (Wnt9b).